Reading from the N-terminus, the 68-residue chain is MAKICDHCGKKPQSGNNVSHANNKSKRRFEPNLVSVRAQLPSGEVKTVTVCTRCLRSGAVVKPVAKHA.

The interval 1-30 is disordered; sequence MAKICDHCGKKPQSGNNVSHANNKSKRRFE. Residues 13 to 22 show a composition bias toward polar residues; that stretch reads QSGNNVSHAN.

This sequence belongs to the bacterial ribosomal protein bL28 family.

In Solidesulfovibrio magneticus (strain ATCC 700980 / DSM 13731 / RS-1) (Desulfovibrio magneticus), this protein is Large ribosomal subunit protein bL28.